Consider the following 814-residue polypeptide: Origin of replication complex subunit 1 (814 aa).

Over residues Met-1 to Arg-15 the composition is skewed to polar residues. The interval Met-1–Tyr-127 is disordered. Low complexity-rich tracts occupy residues Ala-51–Arg-62 and Glu-69–Val-80. The short motif at Pro-105–Gln-112 is the Nuclear localization signal element. Residues Gln-108 to Tyr-127 show a composition bias toward basic residues. A histone H3 binding region spans residues Asp-157–Leu-181. The PHD-type zinc finger occupies Ala-160–Glu-209. Residues Cys-163, Cys-166, Cys-177, Cys-180, His-185, and Cys-188 each contribute to the Zn(2+) site. The segment at Pro-197–Trp-201 is histone H3 binding. Cys-203 and Cys-206 together coordinate Zn(2+). Positions Pro-218 to Ala-335 constitute a BAH domain. Residues Ala-310–Asp-315 are histone H3 binding. 2 stretches are compositionally biased toward acidic residues: residues Asp-339–Asp-349 and Ser-360–Glu-373. The segment at Asp-339–Gln-384 is disordered. A necessary and sufficient for ORC complex assembly region spans residues Pro-433–Ser-804. Residues Gly-468–Thr-475 and Gly-468–Met-476 each bind ATP. Positions 558 and 559 each coordinate Mg(2+). ATP is bound by residues Glu-559, Asn-592, and Arg-657.

It belongs to the ORC1 family. In terms of assembly, component of the origin recognition complex (ORC) composed of at least ORC1, ORC2, ORC3, ORC4, ORC5 and ORC6. ORC is regulated in a cell-cycle and development dependent manner. It is sequentially assembled at the exit from anaphase of mitosis and disassembled as cells enter S phase. Binds unmodified and methylated histone H3. Expressed strongly in root tips and shoot apical meristem (SAM), and weakly in young leaves. Not detected in mature leaves.

It is found in the nucleus. Its function is as follows. Essential protein. Component of the origin recognition complex (ORC) that binds origins of replication. It has a role in both chromosomal replication and mating type transcriptional silencing. Binds to the ARS consensus sequence (ACS) of origins of replication. H3K4me3 effector that positively regulates the transcription of a subset of genes. Required for cell proliferation. The polypeptide is Origin of replication complex subunit 1 (Oryza sativa subsp. japonica (Rice)).